A 427-amino-acid chain; its full sequence is Sensor histidine kinase ArsS (427 aa).

A run of 2 helical transmembrane segments spans residues 3–23 (FSIF…FGAF) and 131–151 (NYFL…LFVL). One can recognise an HAMP domain in the interval 151 to 203 (LQSLLPLRELRSQVKPFAQGDKSVSCKSKQKDEIGDLANEFDNCILKINAMNE). In terms of domain architecture, Histidine kinase spans 211-398 (SIMHELRTPI…LSYHYSNGRI (188 aa)). A Phosphohistidine; by autocatalysis modification is found at His214.

Autophosphorylated.

Its subcellular location is the membrane. It catalyses the reaction ATP + protein L-histidine = ADP + protein N-phospho-L-histidine.. Member of the two-component regulatory system ArsS/ArsR that regulates genes involved in biofilm formation and acid adaptation by acting on major ammonia-producing pathways. Functions as a sensor protein kinase which is autophosphorylated at a histidine residue and transfers its phosphate group to the conserved aspartic acid residue in the regulatory domain of ArsR. In turn, ArsR binds to the upstream promoter regions of target genes including ureA, amiE and amiF to positively regulate their expression in response to acidic pH. Also participates in acidic acclimatation in a phosphorylation-independent pathway by regulating acid-induced trafficking of urease and its accessory proteins to the inner membrane. The chain is Sensor histidine kinase ArsS from Helicobacter pylori (strain ATCC 700392 / 26695) (Campylobacter pylori).